Reading from the N-terminus, the 313-residue chain is Ester hydrolase C11orf54 homolog (313 aa).

Zn(2+) contacts are provided by H264, H266, and H276.

As to quaternary structure, monomer. It depends on Zn(2+) as a cofactor.

It localises to the nucleus. The protein localises to the cytoplasm. In terms of biological role, exhibits ester hydrolase activity on the substrate p-nitrophenyl acetate, in vitro. May regulate DNA damage and repair by regulating HIF1A degradation via chaperone-mediated autophagy (CMA). The protein is Ester hydrolase C11orf54 homolog of Xenopus tropicalis (Western clawed frog).